A 192-amino-acid polypeptide reads, in one-letter code: Peptidyl-tRNA hydrolase (192 aa).

Position 14 (Tyr14) interacts with tRNA. Residue His19 is the Proton acceptor of the active site. Positions 64, 66, and 112 each coordinate tRNA.

Belongs to the PTH family. Monomer.

It localises to the cytoplasm. It carries out the reaction an N-acyl-L-alpha-aminoacyl-tRNA + H2O = an N-acyl-L-amino acid + a tRNA + H(+). Functionally, hydrolyzes ribosome-free peptidyl-tRNAs (with 1 or more amino acids incorporated), which drop off the ribosome during protein synthesis, or as a result of ribosome stalling. Its function is as follows. Catalyzes the release of premature peptidyl moieties from peptidyl-tRNA molecules trapped in stalled 50S ribosomal subunits, and thus maintains levels of free tRNAs and 50S ribosomes. The protein is Peptidyl-tRNA hydrolase of Anaeromyxobacter dehalogenans (strain 2CP-1 / ATCC BAA-258).